The chain runs to 474 residues: Cysteine--tRNA ligase (474 aa).

Residue C29 coordinates Zn(2+). The 'HIGH' region motif lies at 31 to 41 (ATVQGEPHVGH). Zn(2+)-binding residues include C211, H236, and E240. A 'KMSKS' region motif is present at residues 267–271 (KMSKS). K270 contacts ATP.

This sequence belongs to the class-I aminoacyl-tRNA synthetase family. As to quaternary structure, monomer. The cofactor is Zn(2+).

It localises to the cytoplasm. It catalyses the reaction tRNA(Cys) + L-cysteine + ATP = L-cysteinyl-tRNA(Cys) + AMP + diphosphate. The polypeptide is Cysteine--tRNA ligase (Beutenbergia cavernae (strain ATCC BAA-8 / DSM 12333 / CCUG 43141 / JCM 11478 / NBRC 16432 / NCIMB 13614 / HKI 0122)).